The sequence spans 208 residues: Ribosome maturation factor RimP (208 aa).

The segment at 165-208 (TAQPKKGQRQGKEPAKESGQKKQLAEAAPRSGSKRSERGSEKRK) is disordered. 2 stretches are compositionally biased toward basic and acidic residues: residues 174-188 (QGKEPAKESGQKKQL) and 198-208 (KRSERGSEKRK).

It belongs to the RimP family.

It is found in the cytoplasm. Required for maturation of 30S ribosomal subunits. In Sorangium cellulosum (strain So ce56) (Polyangium cellulosum (strain So ce56)), this protein is Ribosome maturation factor RimP.